The primary structure comprises 142 residues: gSG7 salivary protein (142 aa).

An N-terminal signal peptide occupies residues 1–26 (MAARMTIMLPLAVALICLLQTEPGMA). 2 disulfides stabilise this stretch: Cys84/Cys139 and Cys107/Cys117.

The protein resides in the secreted. Functionally, salivary protein that moderately inhibits the alternative pathway for complement system activation in the host. The sequence is that of gSG7 salivary protein from Anopheles darlingi (Mosquito).